The primary structure comprises 270 residues: Probable thioesterase BOA10 (270 aa).

Belongs to the AMT4 thioesterase family.

Its pathway is polyketide biosynthesis. Probable thioesterase; part of the gene cluster B that mediates the biosynthesis of botcinic acid and its botcinin derivatives, acetate-derived polyketides that contribute to virulence when combined with the sesquiterpene botrydial. Botcinic acid and its derivatives have been shown to induce chlorosis and necrosis during host plant infection, but also have antifungal activities. Two polyketide synthases, BOA6 and BOA9, are involved in the biosynthesis of botcinins. BOA6 mediates the formation of the per-methylated tetraketide core by condensation of four units of malonyl-CoA with one unit of acetyl-CoA, which would be methylated in activated methylene groups to yield a bicyclic acid intermediate that could then either be converted to botrylactone derivatives or lose the starter acetate unit through a retro-Claisen type C-C bond cleavage to yield botcinin derivatives. The second polyketide synthase, BOA9, is probably required for the biosynthesis of the tetraketide side chain of botcinins. The methyltransferase (MT) domain within BOA6 is probably responsible for the incorporation of four methyl groups. The trans-enoyl reductase BOA5 might take over the enoyl reductase function of BOA6 that misses an ER domain. The monooxygenases BOA2, BOA3 and BOA4 might be involved in further hydroxylations at C4, C5 and C8, whereas BOA7, close to BOA9, could potentially be involved in the hydroxylation at C4 in the side chain of botcinins. The chain is Probable thioesterase BOA10 from Botryotinia fuckeliana (strain B05.10) (Noble rot fungus).